The chain runs to 341 residues: MSSITETFGVRIDATNSLVQAAIYGFLLAGVAAFAAPIVSTIRVLLSLFVLPGKSLSSFGPRGTWALITGASDGIGKEFALALAAKGYNLILVSRTQSKLDSLAADISSKYGPKISTKTLAMDFAQNKDSDYNNLKKLVDGLDVSILINNVGLSHSIPVPFAETPKQEMTDIIMINCMATLRVTQLLTPGMISRKRGLILTMASFGGFFPTPLLATYSGSKAFLQQWSSALGSELEPHGVHVQCVQSHLITTAMSKIRKPSALVPNPKQFVKATLSKLGRSGGAQNVAFTSTPYWSHGIMQWFLSRFLGERSPIVVKINRGMHEDIRRRALRKAERDAKKQ.

A helical transmembrane segment spans residues 22-42 (AIYGFLLAGVAAFAAPIVSTI). Positions 67, 123, 131, 150, 217, 221, 250, and 252 each coordinate NADP(+). Tyr217 functions as the Proton donor in the catalytic mechanism. Lys221 serves as the catalytic Lowers pKa of active site Tyr.

It belongs to the short-chain dehydrogenases/reductases (SDR) family.

It is found in the endoplasmic reticulum membrane. It carries out the reaction a very-long-chain (3R)-3-hydroxyacyl-CoA + NADP(+) = a very-long-chain 3-oxoacyl-CoA + NADPH + H(+). It participates in lipid metabolism; fatty acid biosynthesis. Its function is as follows. Component of the microsomal membrane bound fatty acid elongation system, which produces the 26-carbon very long-chain fatty acids (VLCFA) from palmitate. Catalyzes the reduction of the 3-ketoacyl-CoA intermediate that is formed in each cycle of fatty acid elongation. VLCFAs serve as precursors for ceramide and sphingolipids. The polypeptide is Very-long-chain 3-oxoacyl-CoA reductase (Phaeosphaeria nodorum (strain SN15 / ATCC MYA-4574 / FGSC 10173) (Glume blotch fungus)).